A 72-amino-acid chain; its full sequence is MSQKLQKPSFLSEYLRSIRLFSKKCVRPSGKELSMSIKRHAIGIGFLGILGYAIKLIHIPINNIIVSSPGKE.

The Cytoplasmic segment spans residues 1–40 (MSQKLQKPSFLSEYLRSIRLFSKKCVRPSGKELSMSIKRH). Residues 41–61 (AIGIGFLGILGYAIKLIHIPI) form a helical membrane-spanning segment. At 62-72 (NNIIVSSPGKE) the chain is on the extracellular side.

This sequence belongs to the SecE/SEC61-gamma family. Heterotrimeric complex composed of SEC61-alpha, SEC61-beta and SEC61-gamma.

Its subcellular location is the endoplasmic reticulum membrane. Its function is as follows. Necessary for protein translocation in the endoplasmic reticulum. This is Probable protein transport protein Sec61 subunit gamma from Encephalitozoon cuniculi (strain GB-M1) (Microsporidian parasite).